The chain runs to 241 residues: Demethylmenaquinone methyltransferase (241 aa).

S-adenosyl-L-methionine-binding positions include Thr68, Asp88, and 114 to 115 (DA).

It belongs to the class I-like SAM-binding methyltransferase superfamily. MenG/UbiE family.

The enzyme catalyses a 2-demethylmenaquinol + S-adenosyl-L-methionine = a menaquinol + S-adenosyl-L-homocysteine + H(+). Its pathway is quinol/quinone metabolism; menaquinone biosynthesis; menaquinol from 1,4-dihydroxy-2-naphthoate: step 2/2. Its function is as follows. Methyltransferase required for the conversion of demethylmenaquinol (DMKH2) to menaquinol (MKH2). The sequence is that of Demethylmenaquinone methyltransferase from Deinococcus radiodurans (strain ATCC 13939 / DSM 20539 / JCM 16871 / CCUG 27074 / LMG 4051 / NBRC 15346 / NCIMB 9279 / VKM B-1422 / R1).